The following is a 239-amino-acid chain: Tumor protein p53-inducible nuclear protein 1 (239 aa).

The LIR motif lies at 25-37; it reads EKEDDEWILVDFI.

Interacts with p53/TP53 and HIPK2. Interacts with PRKCG, GABARAP, GABARAPL1, GABARAPL2, MAP1LC3A, MAP1LC3B and MAP1LC3C. Ubiquitously expressed with highest levels in the thymus.

The protein resides in the cytoplasm. It localises to the cytosol. Its subcellular location is the nucleus. It is found in the PML body. The protein localises to the cytoplasmic vesicle. The protein resides in the autophagosome. Antiproliferative and proapoptotic protein involved in cell stress response which acts as a dual regulator of transcription and autophagy. Acts as a positive regulator of autophagy. In response to cellular stress or activation of autophagy, relocates to autophagosomes where it interacts with autophagosome-associated proteins GABARAP, GABARAPL1/L2, MAP1LC3A/B/C and regulates autophagy. Acts as an antioxidant and plays a major role in p53/TP53-driven oxidative stress response. Possesses both a p53/TP53-independent intracellular reactive oxygen species (ROS) regulatory function and a p53/TP53-dependent transcription regulatory function. Positively regulates p53/TP53 and p73/TP73 and stimulates their capacity to induce apoptosis and regulate cell cycle. In response to double-strand DNA breaks, promotes p53/TP53 phosphorylation on 'Ser-46' and subsequent apoptosis. Acts as a tumor suppressor by inducing cell death by an autophagy and caspase-dependent mechanism. Can reduce cell migration by regulating the expression of SPARC. This chain is Tumor protein p53-inducible nuclear protein 1 (Trp53inp1), found in Mus musculus (Mouse).